The chain runs to 240 residues: Coiled-coil domain-containing protein 152 (240 aa).

Residues 55–223 (MQTKEVAMKQ…LEQRLSVSKD (169 aa)) are a coiled coil.

The protein is Coiled-coil domain-containing protein 152 (CCDC152) of Bos taurus (Bovine).